The following is a 635-amino-acid chain: Threonine--tRNA ligase (635 aa).

The TGS domain occupies 1-61 (MIKITLKDGK…HKDSSLEILT (61 aa)). The segment at 242–532 (DHRKLGKELD…LIEQYAGAFP (291 aa)) is catalytic. Positions 333, 384, and 509 each coordinate Zn(2+).

It belongs to the class-II aminoacyl-tRNA synthetase family. In terms of assembly, homodimer. Requires Zn(2+) as cofactor.

It is found in the cytoplasm. It carries out the reaction tRNA(Thr) + L-threonine + ATP = L-threonyl-tRNA(Thr) + AMP + diphosphate + H(+). In terms of biological role, catalyzes the attachment of threonine to tRNA(Thr) in a two-step reaction: L-threonine is first activated by ATP to form Thr-AMP and then transferred to the acceptor end of tRNA(Thr). Also edits incorrectly charged L-seryl-tRNA(Thr). This chain is Threonine--tRNA ligase, found in Clostridium botulinum (strain Okra / Type B1).